The following is a 285-amino-acid chain: Probable cobalamin biosynthesis protein CobD (285 aa).

The next 4 helical transmembrane spans lie at 10–32, 45–67, 145–167, and 266–283; these read LIDL…GKVI, YLDF…ILSH, VIAP…RAVN, and VYWI…IILY.

It belongs to the CobD/CbiB family.

The protein resides in the cell membrane. The protein operates within cofactor biosynthesis; adenosylcobalamin biosynthesis. Its function is as follows. Converts cobyric acid to cobinamide by the addition of aminopropanol on the F carboxylic group. The sequence is that of Probable cobalamin biosynthesis protein CobD from Pyrococcus furiosus (strain ATCC 43587 / DSM 3638 / JCM 8422 / Vc1).